Reading from the N-terminus, the 89-residue chain is Progonadoliberin-1 (89 aa).

A signal peptide spans 1 to 23; sequence MKAFPTFALLFLVLLFSAHVSDA. A Pyrrolidone carboxylic acid modification is found at Gln-24. Gly-33 bears the Glycine amide mark.

The protein belongs to the GnRH family. As to expression, expressed in the forebrain from larval stages.

It is found in the secreted. Its function is as follows. Stimulates the secretion of gonadotropins. The sequence is that of Progonadoliberin-1 (gnrh1) from Xenopus laevis (African clawed frog).